A 194-amino-acid polypeptide reads, in one-letter code: Probable proteasome subunit beta type-4 (194 aa).

Belongs to the peptidase T1B family. As to quaternary structure, the 26S proteasome consists of a 20S proteasome core and two 19S regulatory subunits. The 20S proteasome core is composed of 28 subunits that are arranged in four stacked rings, resulting in a barrel-shaped structure. The two end rings are each formed by seven alpha subunits, and the two central rings are each formed by seven beta subunits. The catalytic chamber with the active sites is on the inside of the barrel.

The protein localises to the cytoplasm. It is found in the nucleus. Its function is as follows. Non-catalytic component of the proteasome, a multicatalytic proteinase complex which is characterized by its ability to cleave peptides with Arg, Phe, Tyr, Leu, and Glu adjacent to the leaving group at neutral or slightly basic pH. The proteasome has an ATP-dependent proteolytic activity. This chain is Probable proteasome subunit beta type-4, found in Schizosaccharomyces pombe (strain 972 / ATCC 24843) (Fission yeast).